A 947-amino-acid chain; its full sequence is Translation initiation factor IF-2 (947 aa).

A disordered region spans residues 69 to 353; it reads RRRKEVPQEE…TPKPQKKTEV (285 aa). The span at 81–108 shows a compositional bias: low complexity; the sequence is APPAAAEEPSSVDTAVAEEAPAEEVQPV. The segment covering 139–155 has biased composition (acidic residues); sequence PVVEEVIAEPAVEEVVE. Composition is skewed to basic and acidic residues over residues 215-226 and 246-262; these read VTKEKPKVEKAT and KRQE…ERPK. Residues 264 to 284 are compositionally biased toward low complexity; the sequence is AKPSGGPAPRAKEAAPQAAVP. The span at 327–337 shows a compositional bias: basic and acidic residues; sequence QVYEPERDERR. Positions 338–348 are enriched in basic residues; that stretch reads MRRGKKTPKPQ. In terms of domain architecture, tr-type G spans 447-616; sequence PRPPVVTIMG…LLQAEVLELK (170 aa). The interval 456 to 463 is G1; sequence GHVDHGKT. Residue 456-463 participates in GTP binding; sequence GHVDHGKT. The tract at residues 481–485 is G2; sequence GITQH. Residues 502–505 are G3; it reads DTPG. Residues 502–506 and 556–559 each bind GTP; these read DTPGH and NKMD. Residues 556 to 559 form a G4 region; that stretch reads NKMD. The interval 592–594 is G5; the sequence is SAK.

The protein belongs to the TRAFAC class translation factor GTPase superfamily. Classic translation factor GTPase family. IF-2 subfamily.

It is found in the cytoplasm. Its function is as follows. One of the essential components for the initiation of protein synthesis. Protects formylmethionyl-tRNA from spontaneous hydrolysis and promotes its binding to the 30S ribosomal subunits. Also involved in the hydrolysis of GTP during the formation of the 70S ribosomal complex. This Syntrophotalea carbinolica (strain DSM 2380 / NBRC 103641 / GraBd1) (Pelobacter carbinolicus) protein is Translation initiation factor IF-2.